Consider the following 193-residue polypeptide: Protein B4 (193 aa).

3 consecutive transmembrane segments (helical) span residues 15–35 (FFVC…CVFF), 36–56 (CVYF…VFFV), and 160–180 (LSLC…IVFS).

The protein resides in the host membrane. This is Protein B4 (B4) from Homo sapiens (Human).